The chain runs to 317 residues: Annexin A13 (317 aa).

The N-myristoyl glycine moiety is linked to residue G2. Annexin repeat units lie at residues 15–86 (FDAD…ALLD), 87–158 (RPNE…SLLQ), 170–242 (ELAG…TIVR), and 246–317 (DLEG…ALLH).

This sequence belongs to the annexin family. As to quaternary structure, monomer and homodimer. Detected on the tips of microvilli in small intestine (at protein level).

The protein resides in the apical cell membrane. The protein localises to the cell membrane. Its subcellular location is the cytoplasmic vesicle. Binds to membranes enriched in phosphatidylserine or phosphatidylglycerol in a calcium-dependent manner. Half-maximal membrane binding requires about 60 uM calcium. Does not bind to membranes that lack phospholipids with an acidic headgroup. The polypeptide is Annexin A13 (Anxa13) (Mus musculus (Mouse)).